The chain runs to 238 residues: Ribosomal RNA small subunit methyltransferase G (238 aa).

S-adenosyl-L-methionine is bound by residues Gly77, Phe82, 128–129 (AE), and Arg147.

Belongs to the methyltransferase superfamily. RNA methyltransferase RsmG family.

Its subcellular location is the cytoplasm. Functionally, specifically methylates the N7 position of guanine in position 535 of 16S rRNA. The chain is Ribosomal RNA small subunit methyltransferase G from Exiguobacterium sp. (strain ATCC BAA-1283 / AT1b).